The following is a 195-amino-acid chain: Dephospho-CoA kinase (195 aa).

The DPCK domain occupies 3–195 (KIGLTGGIGS…ANMKNVIAEI (193 aa)). ATP is bound at residue 11-16 (GSGKST).

This sequence belongs to the CoaE family.

Its subcellular location is the cytoplasm. It catalyses the reaction 3'-dephospho-CoA + ATP = ADP + CoA + H(+). It participates in cofactor biosynthesis; coenzyme A biosynthesis; CoA from (R)-pantothenate: step 5/5. Catalyzes the phosphorylation of the 3'-hydroxyl group of dephosphocoenzyme A to form coenzyme A. This chain is Dephospho-CoA kinase, found in Corynebacterium glutamicum (Brevibacterium saccharolyticum).